Consider the following 218-residue polypeptide: Pyridoxine/pyridoxamine 5'-phosphate oxidase (218 aa).

Substrate is bound by residues 14–17 (RREY) and Lys-72. FMN is bound by residues 67–72 (RIVLLK), 82–83 (YT), Arg-88, Lys-89, and Gln-111. Tyr-129, Arg-133, and Ser-137 together coordinate substrate. FMN contacts are provided by residues 146–147 (QS) and Trp-191. Substrate is bound at residue 197–199 (RLH). Arg-201 is a binding site for FMN.

The protein belongs to the pyridoxamine 5'-phosphate oxidase family. Homodimer. The cofactor is FMN.

The catalysed reaction is pyridoxamine 5'-phosphate + O2 + H2O = pyridoxal 5'-phosphate + H2O2 + NH4(+). The enzyme catalyses pyridoxine 5'-phosphate + O2 = pyridoxal 5'-phosphate + H2O2. The protein operates within cofactor metabolism; pyridoxal 5'-phosphate salvage; pyridoxal 5'-phosphate from pyridoxamine 5'-phosphate: step 1/1. It participates in cofactor metabolism; pyridoxal 5'-phosphate salvage; pyridoxal 5'-phosphate from pyridoxine 5'-phosphate: step 1/1. Functionally, catalyzes the oxidation of either pyridoxine 5'-phosphate (PNP) or pyridoxamine 5'-phosphate (PMP) into pyridoxal 5'-phosphate (PLP). This is Pyridoxine/pyridoxamine 5'-phosphate oxidase from Escherichia coli O45:K1 (strain S88 / ExPEC).